Consider the following 145-residue polypeptide: Cystatin-like 1 (145 aa).

A signal peptide spans 1–19 (MGIGCWRNPLLLLIALVLS). A Cystatin domain is found at 37–115 (SKKNMNSTLN…KKLRKSLICE (79 aa)). N-linked (GlcNAc...) asparagine glycosylation is present at asparagine 42. 2 cysteine pairs are disulfide-bonded: cysteine 91–cysteine 101 and cysteine 114–cysteine 134.

The protein belongs to the cystatin family.

It localises to the secreted. The polypeptide is Cystatin-like 1 (CSTL1) (Homo sapiens (Human)).